The following is a 295-amino-acid chain: Dual specificity protein phosphatase 15 (295 aa).

The Tyrosine-protein phosphatase domain occupies 1 to 141 (MTEGVLPGLY…LEEFGWASSQ (141 aa)). Residue Thr2 is the site of N-myristoyl glycine attachment. The active-site Phosphocysteine intermediate is Cys85. Residues 251–270 (SSSCTLSASTERPDGSSTPG) are compositionally biased toward polar residues. The interval 251-272 (SSSCTLSASTERPDGSSTPGNP) is disordered.

The protein belongs to the protein-tyrosine phosphatase family. Non-receptor class dual specificity subfamily. In terms of tissue distribution, highly expressed in testis. Expressed in brain; up-regulated in patients with multiple sclerosis gray matter lesions.

Its subcellular location is the cytoplasm. The protein localises to the cell membrane. The catalysed reaction is O-phospho-L-tyrosyl-[protein] + H2O = L-tyrosyl-[protein] + phosphate. The enzyme catalyses O-phospho-L-seryl-[protein] + H2O = L-seryl-[protein] + phosphate. It carries out the reaction O-phospho-L-threonyl-[protein] + H2O = L-threonyl-[protein] + phosphate. Its function is as follows. May dephosphorylate MAPK13, ATF2, ERBB3, PDGFRB and SNX6. Functionally, may play a role in the regulation of oligodendrocyte differentiation. May play a role in the regulation of myelin formation. Involved in the regulation of Erk1/2 phosphorylation in Schwann cells; the signaling may be linked to the regulation of myelination. This is Dual specificity protein phosphatase 15 from Homo sapiens (Human).